We begin with the raw amino-acid sequence, 140 residues long: UPF0132 membrane protein MJ1527 (140 aa).

Helical transmembrane passes span 40 to 60 (MEGV…LLLE), 70 to 90 (AMQS…VSAI), and 92 to 112 (IIGW…WIVG).

Belongs to the UPF0132 family.

It is found in the cell membrane. This Methanocaldococcus jannaschii (strain ATCC 43067 / DSM 2661 / JAL-1 / JCM 10045 / NBRC 100440) (Methanococcus jannaschii) protein is UPF0132 membrane protein MJ1527.